Here is a 98-residue protein sequence, read N- to C-terminus: NADH-ubiquinone oxidoreductase chain 4L (98 aa).

3 helical membrane-spanning segments follow: residues 2 to 22 (PSISTNIILAFITALLGMLIF), 29 to 49 (SLLCLEGMMLSMFILSTLTIL), and 61 to 81 (ILLLVFAACEAAVGLALLVTV).

It belongs to the complex I subunit 4L family. In terms of assembly, core subunit of respiratory chain NADH dehydrogenase (Complex I) which is composed of 45 different subunits.

The protein localises to the mitochondrion inner membrane. It carries out the reaction a ubiquinone + NADH + 5 H(+)(in) = a ubiquinol + NAD(+) + 4 H(+)(out). Its function is as follows. Core subunit of the mitochondrial membrane respiratory chain NADH dehydrogenase (Complex I) which catalyzes electron transfer from NADH through the respiratory chain, using ubiquinone as an electron acceptor. Part of the enzyme membrane arm which is embedded in the lipid bilayer and involved in proton translocation. This Lemur catta (Ring-tailed lemur) protein is NADH-ubiquinone oxidoreductase chain 4L (MT-ND4L).